We begin with the raw amino-acid sequence, 747 residues long: Fibroblast growth factor receptor (747 aa).

An N-terminal signal peptide occupies residues 1 to 24 (MIQLQNTFIFIALTIFTSASTTSL). At 25-288 (KNETKPLNTI…TEEIPQDTHY (264 aa)) the chain is on the extracellular side. Asparagine 26, asparagine 42, and asparagine 63 each carry an N-linked (GlcNAc...) asparagine glycan. The disordered stretch occupies residues 47–68 (EEDLFDTNGAPKSDTVNASTTT). Ig-like C2-type domains follow at residues 74–167 (PRWV…YELD) and 175–267 (PPVL…AWLT). A disulfide bridge links cysteine 99 with cysteine 151. N-linked (GlcNAc...) asparagine glycosylation is found at asparagine 161, asparagine 185, asparagine 217, asparagine 227, and asparagine 240. Residues cysteine 198 and cysteine 251 are joined by a disulfide bond. A helical transmembrane segment spans residues 289-309 (LIYIFGVVCFIILLAFIVYMC). Residues 310-747 (NSRYQNKDPP…NGHARMQSDV (438 aa)) lie on the Cytoplasmic side of the membrane. Positions 377-660 (ILLHERIDEG…QLVEDLDRML (284 aa)) constitute a Protein kinase domain. ATP contacts are provided by residues 383–391 (IDEGFFGQV) and lysine 412. The Proton acceptor role is filled by aspartate 525. Position 556 is a phosphotyrosine; by autocatalysis (tyrosine 556). A disordered region spans residues 679 to 731 (YLPSDVDSNEDTESRDSANATGEDSDSVFEPIDGHGAHAYEVDEAGPLLNPQP). Basic and acidic residues predominate over residues 710–719 (IDGHGAHAYE).

The protein belongs to the protein kinase superfamily. Tyr protein kinase family. Fibroblast growth factor receptor subfamily.

It localises to the membrane. The enzyme catalyses L-tyrosyl-[protein] + ATP = O-phospho-L-tyrosyl-[protein] + ADP + H(+). In terms of biological role, receptor for basic fibroblast growth factor. This is Fibroblast growth factor receptor (FGFR) from Ciona intestinalis (Transparent sea squirt).